Reading from the N-terminus, the 430-residue chain is Cytochrome c biogenesis protein CcsB (430 aa).

3 consecutive transmembrane segments (helical) span residues 14 to 34 (LRLA…GTIL), 72 to 92 (SVWF…CSWR), and 162 to 182 (VGPL…AWGA).

This sequence belongs to the Ccs1/CcsB family. In terms of assembly, may interact with CcsA.

It is found in the cellular thylakoid membrane. Functionally, required during biogenesis of c-type cytochromes (cytochrome c6 and cytochrome f) at the step of heme attachment. The sequence is that of Cytochrome c biogenesis protein CcsB from Synechococcus sp. (strain WH7803).